Reading from the N-terminus, the 199-residue chain is MSCTPVSTKCNDIWIDFSCTGPSVSELQKKEPNAWAAILRSQKNQQTAEDDTIIGSICDKQGLCSKDEYAYSQYCACVNSGTLWAECAFAPCNGNKNAYKTTEQRNILTNKQCPSGLTICQNIAEYGGTGNISDLYQNFNCNSVINTFLINVMNHPFLTLILIILILVIIYRLMSSSAAKQNGDKLPPPSLIFSNLNNF.

Asn131 is a glycosylation site (N-linked (GlcNAc...) asparagine; by host). A helical membrane pass occupies residues 150–170 (INVMNHPFLTLILIILILVII).

The protein belongs to the asfivirus E199L family. Interacts with host PYCR2; this interaction results in autophagy activation.

Its subcellular location is the virion membrane. The protein resides in the host membrane. In terms of biological role, essential for viral fusion with host endosomal membrane and core release. Not required for virus morphogenesis and egress. Induces complete autophagy through the interaction with and down-regulation of host PYCR2. The sequence is that of Inner membrane protein E199L from African swine fever virus (isolate Pig/Kenya/KEN-50/1950) (ASFV).